Here is a 778-residue protein sequence, read N- to C-terminus: Ubiquitin thioesterase trabid (778 aa).

2 RanBP2-type zinc fingers span residues 5 to 36 (KDDA…SKPL) and 89 to 118 (DSEK…KRGG). Residues 187–197 (ASHNQSQSQHR) are compositionally biased toward polar residues. Positions 187–226 (ASHNQSQSQHRQPVLQQQMQLQLQPQQQRESSSSAAVPPQ) are disordered. Over residues 198 to 226 (QPVLQQQMQLQLQPQQQRESSSSAAVPPQ) the composition is skewed to low complexity. The RanBP2-type 3 zinc-finger motif lies at 232-261 (YVSKWACNSCTYENWPRSIKCSMCGKTRER). Positions 265–290 (GSQNDLHASSSLNSQEENQQQLQQPN) are disordered. A compositionally biased stretch (low complexity) spans 273–288 (SSSLNSQEENQQQLQQ). In terms of domain architecture, OTU spans 507-665 (MFVLWNRSAG…RGHFSALVPM (159 aa)). Residue cysteine 518 is the Nucleophile of the active site. Histidine 658 (proton acceptor) is an active-site residue. A phosphoserine mark is found at serine 770, serine 771, and serine 775.

It belongs to the peptidase C64 family. As to quaternary structure, interacts with Apc.

It carries out the reaction Thiol-dependent hydrolysis of ester, thioester, amide, peptide and isopeptide bonds formed by the C-terminal Gly of ubiquitin (a 76-residue protein attached to proteins as an intracellular targeting signal).. In terms of biological role, positive regulator of the Wnt signaling pathway. Specifically cleaves 'Lys-63'-linked ubiquitin chains. May act by deubiquitinating APC protein, a negative regulator of Wnt-mediated transcription. Required for an efficient wg response, but not for other signaling responses, in the eye. The chain is Ubiquitin thioesterase trabid (trbd) from Drosophila melanogaster (Fruit fly).